Reading from the N-terminus, the 72-residue chain is Translation initiation factor IF-1 (72 aa).

Residues 1-72 form the S1-like domain; sequence MAKDDVIEIE…TKGRITYRFK (72 aa).

The protein belongs to the IF-1 family. In terms of assembly, component of the 30S ribosomal translation pre-initiation complex which assembles on the 30S ribosome in the order IF-2 and IF-3, IF-1 and N-formylmethionyl-tRNA(fMet); mRNA recruitment can occur at any time during PIC assembly.

It localises to the cytoplasm. In terms of biological role, one of the essential components for the initiation of protein synthesis. Stabilizes the binding of IF-2 and IF-3 on the 30S subunit to which N-formylmethionyl-tRNA(fMet) subsequently binds. Helps modulate mRNA selection, yielding the 30S pre-initiation complex (PIC). Upon addition of the 50S ribosomal subunit IF-1, IF-2 and IF-3 are released leaving the mature 70S translation initiation complex. The polypeptide is Translation initiation factor IF-1 (Latilactobacillus sakei subsp. sakei (strain 23K) (Lactobacillus sakei subsp. sakei)).